Reading from the N-terminus, the 256-residue chain is 5'-nucleotidase SurE (256 aa).

Residues aspartate 8, aspartate 9, serine 39, and asparagine 95 each coordinate a divalent metal cation.

This sequence belongs to the SurE nucleotidase family. Requires a divalent metal cation as cofactor.

It is found in the cytoplasm. It catalyses the reaction a ribonucleoside 5'-phosphate + H2O = a ribonucleoside + phosphate. Functionally, nucleotidase that shows phosphatase activity on nucleoside 5'-monophosphates. This chain is 5'-nucleotidase SurE, found in Methanosphaera stadtmanae (strain ATCC 43021 / DSM 3091 / JCM 11832 / MCB-3).